A 435-amino-acid chain; its full sequence is Elongation factor 1-alpha (435 aa).

Residues lysine 4 to valine 229 enclose the tr-type G domain. Positions glycine 13 to serine 20 are G1. Residue glycine 13–serine 20 coordinates GTP. Serine 20 is a Mg(2+) binding site. The G2 stretch occupies residues glycine 69–asparagine 73. Residues aspartate 90–glycine 93 form a G3 region. GTP-binding positions include aspartate 90–histidine 94 and threonine 152–aspartate 155. Residues threonine 152–aspartate 155 are G4. A G5 region spans residues valine 193 to isoleucine 195.

It belongs to the TRAFAC class translation factor GTPase superfamily. Classic translation factor GTPase family. EF-Tu/EF-1A subfamily.

The protein localises to the cytoplasm. It catalyses the reaction GTP + H2O = GDP + phosphate + H(+). GTP hydrolase that promotes the GTP-dependent binding of aminoacyl-tRNA to the A-site of ribosomes during protein biosynthesis. This chain is Elongation factor 1-alpha, found in Metallosphaera sedula (strain ATCC 51363 / DSM 5348 / JCM 9185 / NBRC 15509 / TH2).